The sequence spans 416 residues: Peroxisomal isocitrate dehydrogenase [NADP] (416 aa).

NADP(+)-binding positions include 77-79 (TIT) and R84. T79 is a binding site for substrate. Substrate is bound by residues 96-102 (SPNGTIR), R111, and R134. D253 provides a ligand contact to Mn(2+). K261 is a binding site for NADP(+). D276 provides a ligand contact to Mn(2+). NADP(+)-binding positions include 311-316 (GTVTRH) and N329. Positions 414-416 (SRL) match the Peroxisomal targeting signal motif.

The protein belongs to the isocitrate and isopropylmalate dehydrogenases family. It depends on Mg(2+) as a cofactor. Requires Mn(2+) as cofactor.

The protein localises to the peroxisome. It catalyses the reaction D-threo-isocitrate + NADP(+) = 2-oxoglutarate + CO2 + NADPH. Its function is as follows. May be involved in response to oxidative stresses. The sequence is that of Peroxisomal isocitrate dehydrogenase [NADP] (ICDH) from Arabidopsis thaliana (Mouse-ear cress).